Here is a 189-residue protein sequence, read N- to C-terminus: UPF0312 protein VC_A0539 (189 aa).

The signal sequence occupies residues 1 to 22 (MKKTLMAVGLAAVMSIPFAANA).

The protein belongs to the UPF0312 family. Type 1 subfamily.

It localises to the periplasm. The chain is UPF0312 protein VC_A0539 from Vibrio cholerae serotype O1 (strain ATCC 39315 / El Tor Inaba N16961).